The chain runs to 356 residues: Cyanide hydratase (356 aa).

Positions 6-285 constitute a CN hydrolase domain; the sequence is YKAAAVTSEP…DGLLFVDIDL (280 aa). Catalysis depends on Glu-46, which acts as the Proton acceptor. The active site involves Lys-128. Residue Cys-163 is the Nucleophile of the active site.

It belongs to the carbon-nitrogen hydrolase superfamily. Nitrilase family. As to quaternary structure, oligomer of dimers, forming left-handed helical fibers.

The enzyme catalyses formamide = hydrogen cyanide + H2O. Its function is as follows. Catalyzes the hydration of cyanide to formamide. Degradation of cyanide may be important for plant pathogenic fungi in infection of cyanogenic plants. This Leptosphaeria maculans (Blackleg fungus) protein is Cyanide hydratase.